The chain runs to 315 residues: DNA-directed RNA polymerase subunit alpha (315 aa).

The alpha N-terminal domain (alpha-NTD) stretch occupies residues 1-228; that stretch reads MAQFQIECVE…DLFNPLKDIS (228 aa). Residues 243–315 form an alpha C-terminal domain (alpha-CTD) region; sequence TAQIPIEELQ…LPQERSSKHN (73 aa).

It belongs to the RNA polymerase alpha chain family. In terms of assembly, homodimer. In cyanobacteria the RNAP catalytic core is composed of 2 alpha, 1 beta, 1 beta', 1 gamma and 1 omega subunit. When a sigma factor is associated with the core the holoenzyme is formed, which can initiate transcription.

The enzyme catalyses RNA(n) + a ribonucleoside 5'-triphosphate = RNA(n+1) + diphosphate. Its function is as follows. DNA-dependent RNA polymerase catalyzes the transcription of DNA into RNA using the four ribonucleoside triphosphates as substrates. This chain is DNA-directed RNA polymerase subunit alpha, found in Nostoc sp. (strain PCC 7120 / SAG 25.82 / UTEX 2576).